We begin with the raw amino-acid sequence, 668 residues long: DNA mismatch repair protein MutL (668 aa).

Belongs to the DNA mismatch repair MutL/HexB family.

This protein is involved in the repair of mismatches in DNA. It is required for dam-dependent methyl-directed DNA mismatch repair. May act as a 'molecular matchmaker', a protein that promotes the formation of a stable complex between two or more DNA-binding proteins in an ATP-dependent manner without itself being part of a final effector complex. This Limosilactobacillus reuteri (strain DSM 20016) (Lactobacillus reuteri) protein is DNA mismatch repair protein MutL.